The following is a 494-amino-acid chain: Psoralen synthase (494 aa).

A helical transmembrane segment spans residues 12–29 (YFFSLFLVTIFLYKWLTL). Position 436 (cysteine 436) interacts with heme.

The protein belongs to the cytochrome P450 family.

The protein resides in the endoplasmic reticulum membrane. It localises to the microsome membrane. It catalyses the reaction (7S)-marmesin + reduced [NADPH--hemoprotein reductase] + O2 = psoralen + acetone + oxidized [NADPH--hemoprotein reductase] + 2 H2O + H(+). With respect to regulation, inhibited by columbianetin. Involved in linear furanocumarin (psoralen) biosynthesis. Converts marmesin to psoralen. The protein is Psoralen synthase (CYP71AJ1) of Ammi majus (Bishop's weed).